The sequence spans 372 residues: tRNA-specific 2-thiouridylase MnmA (372 aa).

Residues 6-13 and leucine 32 each bind ATP; that span reads AMSGGVDS. The Nucleophile role is filled by cysteine 101. Cysteines 101 and 193 form a disulfide. Residue glycine 125 coordinates ATP. An interaction with tRNA region spans residues 143–145; it reads KDQ. Residue cysteine 193 is the Cysteine persulfide intermediate of the active site.

Belongs to the MnmA/TRMU family.

It is found in the cytoplasm. The catalysed reaction is S-sulfanyl-L-cysteinyl-[protein] + uridine(34) in tRNA + AH2 + ATP = 2-thiouridine(34) in tRNA + L-cysteinyl-[protein] + A + AMP + diphosphate + H(+). Its function is as follows. Catalyzes the 2-thiolation of uridine at the wobble position (U34) of tRNA, leading to the formation of s(2)U34. This Corynebacterium kroppenstedtii (strain DSM 44385 / JCM 11950 / CIP 105744 / CCUG 35717) protein is tRNA-specific 2-thiouridylase MnmA.